Here is a 296-residue protein sequence, read N- to C-terminus: Lipoyl synthase (296 aa).

The [4Fe-4S] cluster site is built by Cys-38, Cys-43, Cys-49, Cys-64, Cys-68, Cys-71, and Ser-279. Residues 50–268 (WDGGCLTFMV…AEYGRSLGFK (219 aa)) enclose the Radical SAM core domain.

It belongs to the radical SAM superfamily. Lipoyl synthase family. [4Fe-4S] cluster serves as cofactor.

The protein resides in the cytoplasm. It carries out the reaction [[Fe-S] cluster scaffold protein carrying a second [4Fe-4S](2+) cluster] + N(6)-octanoyl-L-lysyl-[protein] + 2 oxidized [2Fe-2S]-[ferredoxin] + 2 S-adenosyl-L-methionine + 4 H(+) = [[Fe-S] cluster scaffold protein] + N(6)-[(R)-dihydrolipoyl]-L-lysyl-[protein] + 4 Fe(3+) + 2 hydrogen sulfide + 2 5'-deoxyadenosine + 2 L-methionine + 2 reduced [2Fe-2S]-[ferredoxin]. It functions in the pathway protein modification; protein lipoylation via endogenous pathway; protein N(6)-(lipoyl)lysine from octanoyl-[acyl-carrier-protein]: step 2/2. Catalyzes the radical-mediated insertion of two sulfur atoms into the C-6 and C-8 positions of the octanoyl moiety bound to the lipoyl domains of lipoate-dependent enzymes, thereby converting the octanoylated domains into lipoylated derivatives. The protein is Lipoyl synthase of Methanocella arvoryzae (strain DSM 22066 / NBRC 105507 / MRE50).